Here is a 370-residue protein sequence, read N- to C-terminus: Molybdenum import ATP-binding protein ModC (370 aa).

Residues 2-233 (SVRVDIGHRL…LDLLPAEERG (232 aa)) enclose the ABC transporter domain. 31-38 (GPSGSGKT) serves as a coordination point for ATP. Residues 293-359 (GLSALNILPG…VKTVSFDRAN (67 aa)) enclose the Mop domain.

The protein belongs to the ABC transporter superfamily. Molybdate importer (TC 3.A.1.8) family. The complex is composed of two ATP-binding proteins (ModC), two transmembrane proteins (ModB) and a solute-binding protein (ModA).

It localises to the cell inner membrane. It carries out the reaction molybdate(out) + ATP + H2O = molybdate(in) + ADP + phosphate + H(+). In terms of biological role, part of the ABC transporter complex ModABC involved in molybdenum import. Responsible for energy coupling to the transport system. This chain is Molybdenum import ATP-binding protein ModC, found in Mesorhizobium japonicum (strain LMG 29417 / CECT 9101 / MAFF 303099) (Mesorhizobium loti (strain MAFF 303099)).